The sequence spans 458 residues: UDP-N-acetylmuramoylalanine--D-glutamate ligase (458 aa).

An ATP-binding site is contributed by G124–T130.

Belongs to the MurCDEF family.

The protein resides in the cytoplasm. It catalyses the reaction UDP-N-acetyl-alpha-D-muramoyl-L-alanine + D-glutamate + ATP = UDP-N-acetyl-alpha-D-muramoyl-L-alanyl-D-glutamate + ADP + phosphate + H(+). The protein operates within cell wall biogenesis; peptidoglycan biosynthesis. In terms of biological role, cell wall formation. Catalyzes the addition of glutamate to the nucleotide precursor UDP-N-acetylmuramoyl-L-alanine (UMA). The polypeptide is UDP-N-acetylmuramoylalanine--D-glutamate ligase (Clostridium botulinum (strain Loch Maree / Type A3)).